The sequence spans 28 residues: Chassatide C12 (28 aa).

The cyclopeptide (Glu-Asn) cross-link spans 1–28 (EYCGESCYLIPCFTPGCYCVSRQCVNKN). 3 disulfides stabilise this stretch: cysteine 3-cysteine 17, cysteine 7-cysteine 19, and cysteine 12-cysteine 24.

This is a cyclic peptide. Expressed in fruit, pedicel, leaf and stem but not in root (at protein level).

Its function is as follows. Probably participates in a plant defense mechanism. This chain is Chassatide C12, found in Chassalia chartacea (Chassalia curviflora).